A 485-amino-acid polypeptide reads, in one-letter code: GTPase Obg (485 aa).

Residues 1-159 enclose the Obg domain; the sequence is MKFVDEVRIF…LTLRLELKLL (159 aa). Residues 160 to 332 form the OBG-type G domain; it reads ADVGLLGFPN…LMDSVAEVLF (173 aa). Residues 166-173, 191-195, 213-216, 284-287, and 313-315 each bind GTP; these read GFPNAGKS, FTTLV, DIPG, NKLD, and SCA. Mg(2+) is bound by residues Ser173 and Thr193. Composition is skewed to low complexity over residues 367-385, 394-428, 437-446, and 455-474; these read AGAAAATKSATKKSAAAKK, RKAGAVAKTSAARKAGTAAAKKAPARKSGTAPVKK, RKSGTAPAKK, and RKSGSSGKAAAKKASAATKR. The tract at residues 367-485 is disordered; it reads AGAAAATKSA…PARKSGGGRS (119 aa).

It belongs to the TRAFAC class OBG-HflX-like GTPase superfamily. OBG GTPase family. Monomer. Mg(2+) serves as cofactor.

The protein resides in the cytoplasm. An essential GTPase which binds GTP, GDP and possibly (p)ppGpp with moderate affinity, with high nucleotide exchange rates and a fairly low GTP hydrolysis rate. Plays a role in control of the cell cycle, stress response, ribosome biogenesis and in those bacteria that undergo differentiation, in morphogenesis control. This Myxococcus xanthus (strain DK1622) protein is GTPase Obg.